The primary structure comprises 138 residues: Cysteine desulfuration protein SufE (138 aa).

The active-site Cysteine persulfide intermediate is the cysteine 51.

This sequence belongs to the SufE family. Homodimer. Interacts with SufS.

Its subcellular location is the cytoplasm. Its pathway is cofactor biosynthesis; iron-sulfur cluster biosynthesis. Functionally, participates in cysteine desulfuration mediated by SufS. Cysteine desulfuration mobilizes sulfur from L-cysteine to yield L-alanine and constitutes an essential step in sulfur metabolism for biosynthesis of a variety of sulfur-containing biomolecules. Functions as a sulfur acceptor for SufS, by mediating the direct transfer of the sulfur atom from the S-sulfanylcysteine of SufS, an intermediate product of cysteine desulfuration process. The sequence is that of Cysteine desulfuration protein SufE from Sodalis glossinidius (strain morsitans).